We begin with the raw amino-acid sequence, 698 residues long: Polyribonucleotide nucleotidyltransferase (698 aa).

Positions 490 and 496 each coordinate Mg(2+). Residues 558-617 (PVIYTMRIPQDKIGALIGPGGKNIKRITETTDTKIDINDDGVVQIAAVNGDKLAMAKAEI) form the KH domain. Positions 627–695 (NKIYKGKVVS…NNGKVRLSRK (69 aa)) constitute an S1 motif domain.

It belongs to the polyribonucleotide nucleotidyltransferase family. Mg(2+) serves as cofactor.

Its subcellular location is the cytoplasm. The catalysed reaction is RNA(n+1) + phosphate = RNA(n) + a ribonucleoside 5'-diphosphate. Functionally, involved in mRNA degradation. Catalyzes the phosphorolysis of single-stranded polyribonucleotides processively in the 3'- to 5'-direction. This chain is Polyribonucleotide nucleotidyltransferase, found in Elusimicrobium minutum (strain Pei191).